The sequence spans 274 residues: MEEDFNMSTPGVKVGVXEEEKKLSYYKYYEQDLAPVPAEKIAILQGGPIAPEKCIPFDERNKFLKGEDDEYANIGFGVAADGTALVCNTTYMPGVTGEMLDWWFPWHSVGSDLRYKIWDPEDHYFARAYPASYVVDPNVPMNQKTWGVDHYIMEDVGPGPEFLKLCFKRPADFGYDESIIGTEKCESLVCAIGESSCAAAMTHKWHPYKDGVLFESRFWIGYRIDEEGNIVKAIPEGVSIPPFVPQGLFAHNIKEFTNLAAILPTLYAEEKDTF.

His123, Glu154, His251, and Glu255 together coordinate Zn(2+).

Belongs to the DAPG/phloretin hydrolase family. As to quaternary structure, homodimer. It depends on Zn(2+) as a cofactor.

It is found in the cytoplasm. The enzyme catalyses phloretin + H2O = phloretate + 1,3,5-trihydroxybenzene + H(+). Catalyzes the hydrolytic C-C cleavage of phloretin to phloroglucinol and 3-(4-hydroxyphenyl)propionic acid during flavonoid degradation. Also hydrolyzes other C-acylated phenols. This is Phloretin hydrolase (phy) from Eubacterium ramulus.